The primary structure comprises 423 residues: Mannitol-1-phosphate 5-dehydrogenase (423 aa).

Zn(2+) contacts are provided by Cys-40, His-69, and Glu-70.

The protein belongs to the zinc-containing alcohol dehydrogenase family. Zn(2+) serves as cofactor.

The catalysed reaction is D-mannitol 1-phosphate + NAD(+) = beta-D-fructose 6-phosphate + NADH + H(+). In terms of biological role, seems to be involved in mannitol utilization. Complements an E.coli mtlD deletion mutant. In Aliivibrio fischeri (strain ATCC 700601 / ES114) (Vibrio fischeri), this protein is Mannitol-1-phosphate 5-dehydrogenase.